Here is a 314-residue protein sequence, read N- to C-terminus: ATP synthase gamma chain (314 aa).

Belongs to the ATPase gamma chain family. F-type ATPases have 2 components, CF(1) - the catalytic core - and CF(0) - the membrane proton channel. CF(1) has five subunits: alpha(3), beta(3), gamma(1), delta(1), epsilon(1). CF(0) has three main subunits: a, b and c.

It is found in the cell inner membrane. Functionally, produces ATP from ADP in the presence of a proton gradient across the membrane. The gamma chain is believed to be important in regulating ATPase activity and the flow of protons through the CF(0) complex. In Gloeobacter violaceus (strain ATCC 29082 / PCC 7421), this protein is ATP synthase gamma chain.